A 351-amino-acid chain; its full sequence is Transcription factor bHLH93 (351 aa).

The bHLH domain maps to 174–223 (GQPSKNLMAERRRRKRLNDRLSMLRSIVPKISKMDRTSILGDAIDYMKEL).

In terms of assembly, homodimer. Interacts with FAMA. As to expression, broadly expressed.

It localises to the nucleus. Transcription factor. May be involved in the differentiation of stomatal guard cells. The chain is Transcription factor bHLH93 (BHLH93) from Arabidopsis thaliana (Mouse-ear cress).